The chain runs to 445 residues: Reticulon-4 receptor-like 1 (445 aa).

Residues 1-24 (MLRKGCCVELLLLLLAGELPLGGG) form the signal peptide. The 30-residue stretch at 25-54 (CPRDCVCYPAPMTVSCQAHNFAAIPEGIPE) folds into the LRRNT domain. 8 LRR repeats span residues 55–76 (DSER…HFSP), 77–98 (AMVT…TFEG), 101–123 (HLEE…TFQG), 126–147 (KLHA…IFGG), 150–171 (SLQY…IFVD), 174–195 (NLSH…IFRG), 198–219 (NLDR…AFHD), and 222–243 (RLTT…CLAP). In terms of domain architecture, LRRCT spans 255–306 (NAWDCGCRARSLWEWLRRFRGSSSAVPCATPELRQGQDLKLLRVEDFRNCTG). 2 disordered regions span residues 307 to 377 (PVSP…SGKE) and 401 to 424 (RPKR…QQAS). Basic residues-rich tracts occupy residues 352–366 (GYKK…HRNR) and 401–413 (RPKR…RRTP). S424 carries the GPI-anchor amidated serine lipid modification. A helical membrane pass occupies residues 424-444 (SSGTALGAPLLAWILGLAVTL). Residues 425–445 (SGTALGAPLLAWILGLAVTLR) constitute a propeptide, removed in mature form.

The protein belongs to the Nogo receptor family. In terms of assembly, identified in a complex that contains RTN4R, RTN4RL1 and NGFR; the interaction depends on the presence of chondroitin sulfate proteoglycans. Does not interact with MAG, OMG and RTN4. Detected in brain (at protein level). Detected in retina ganglion cell layer and inner nuclear layer.

It is found in the cell membrane. Its subcellular location is the membrane raft. The protein localises to the perikaryon. The protein resides in the cell projection. Cell surface receptor that plays a functionally redundant role in postnatal brain development and in regulating axon regeneration in the adult central nervous system. Contributes to normal axon migration across the brain midline and normal formation of the corpus callosum. Protects motoneurons against apoptosis; protection against apoptosis is probably mediated by MAG. Plays a role in inhibiting neurite outgrowth and axon regeneration via its binding to neuronal chondroitin sulfate proteoglycans. Binds heparin. Like other family members, plays a role in restricting the number dendritic spines and the number of synapses that are formed during brain development. Signaling mediates activation of Rho and downstream reorganization of the actin cytoskeleton. This Mus musculus (Mouse) protein is Reticulon-4 receptor-like 1.